We begin with the raw amino-acid sequence, 348 residues long: Eukaryotic translation initiation factor 3 subunit I (348 aa).

WD repeat units lie at residues 8–49 (GHER…GTFE), 51–91 (HMGT…YTYE), 93–135 (PTPV…PKNQ), 147–186 (DGAK…FIDS), 196–238 (EKIH…KVYK), and 294–333 (GHFG…YDFE).

It belongs to the eIF-3 subunit I family. As to quaternary structure, component of the eukaryotic translation initiation factor 3 (eIF-3) complex.

Its subcellular location is the cytoplasm. Component of the eukaryotic translation initiation factor 3 (eIF-3) complex, which is involved in protein synthesis of a specialized repertoire of mRNAs and, together with other initiation factors, stimulates binding of mRNA and methionyl-tRNAi to the 40S ribosome. The eIF-3 complex specifically targets and initiates translation of a subset of mRNAs involved in cell proliferation. In Meyerozyma guilliermondii (strain ATCC 6260 / CBS 566 / DSM 6381 / JCM 1539 / NBRC 10279 / NRRL Y-324) (Yeast), this protein is Eukaryotic translation initiation factor 3 subunit I.